The following is a 447-amino-acid chain: Argininosuccinate synthase (447 aa).

Residues 17–25 (AFSGGLDTS) and Ala-43 contribute to the ATP site. L-citrulline is bound at residue Tyr-99. ATP is bound by residues Gly-129 and Thr-131. Positions 131, 135, and 136 each coordinate L-aspartate. Asn-135 is an L-citrulline binding site. Asp-136 contributes to the ATP binding site. L-citrulline contacts are provided by Arg-139 and Ser-192. Asp-194 provides a ligand contact to ATP. L-citrulline contacts are provided by Thr-201, Glu-203, and Glu-280.

The protein belongs to the argininosuccinate synthase family. Type 2 subfamily. In terms of assembly, homotetramer.

Its subcellular location is the cytoplasm. It catalyses the reaction L-citrulline + L-aspartate + ATP = 2-(N(omega)-L-arginino)succinate + AMP + diphosphate + H(+). Its pathway is amino-acid biosynthesis; L-arginine biosynthesis; L-arginine from L-ornithine and carbamoyl phosphate: step 2/3. In Paracidovorax citrulli (strain AAC00-1) (Acidovorax citrulli), this protein is Argininosuccinate synthase.